The sequence spans 488 residues: Glutamate--tRNA ligase (488 aa).

Residues 16 to 26 (PSPTGEPHVGT) carry the 'HIGH' region motif. The 'KMSKS' region motif lies at 257-261 (KLSKR). Lys-260 is a binding site for ATP.

This sequence belongs to the class-I aminoacyl-tRNA synthetase family. Glutamate--tRNA ligase type 1 subfamily. Monomer.

It localises to the cytoplasm. It carries out the reaction tRNA(Glu) + L-glutamate + ATP = L-glutamyl-tRNA(Glu) + AMP + diphosphate. Its function is as follows. Catalyzes the attachment of glutamate to tRNA(Glu) in a two-step reaction: glutamate is first activated by ATP to form Glu-AMP and then transferred to the acceptor end of tRNA(Glu). This Rhizobium etli (strain ATCC 51251 / DSM 11541 / JCM 21823 / NBRC 15573 / CFN 42) protein is Glutamate--tRNA ligase.